A 99-amino-acid chain; its full sequence is Protein Frey (99 aa).

The chain crosses the membrane as a helical span at residues 7–29; it reads GALYPRAGLSLFLLYLVLAAVLL. The segment at 65–88 is disordered; sequence PKHPWPRGPRPLLSRAQQRKRDGP.

In terms of assembly, interacts with SPPL2C (via active sites); the interaction stabilizes FREY1 protein and inhibits SPPL2C proteolytic activity. Interacts with IZUMO1; the interaction retains IZUMO1 at the endoplasmic reticulum membrane and coordinates IZUMO1 complex assembly.

It localises to the endoplasmic reticulum membrane. Its function is as follows. Key regulator for male fertility expressed transiently in round spermatids where it recruits IZUMO1 at the endoplasmic reticulum (ER) membrane and coordinates the oolemmal binding multimeric complex (IZUMO1 complex) assembly. Upon complete assembly of the IZUMO1 complex, its ER retention is released, facilitating IZUMO1 complex export to the acrosome. Through the interaction with SPPL2C, inhibits its intramembrane protease activity directly accessing the catalytic center of an I-CLiP. This is Protein Frey from Ailuropoda melanoleuca (Giant panda).